Reading from the N-terminus, the 237-residue chain is Type II secretion system protein J (237 aa).

The propeptide at 1 to 6 is leader sequence; the sequence is MRLQRG. Phe-7 bears the N-methylphenylalanine mark. The chain crosses the membrane as a helical span at residues 7–29; it reads FTLLELLIAIAIFALLALATYRM. The interval 203–237 is disordered; it reads PLKQDQPQGQPGGENGENGEGGVPQPPEGMPGAPE. Over residues 212–224 the composition is skewed to gly residues; sequence QPGGENGENGEGG. Residues 226-237 show a composition bias toward pro residues; it reads PQPPEGMPGAPE.

This sequence belongs to the GSP J family. As to quaternary structure, type II secretion is composed of four main components: the outer membrane complex, the inner membrane complex, the cytoplasmic secretion ATPase and the periplasm-spanning pseudopilus. Forms the tip of the type II pseudopilus by interacting with XcpV, XcpU and XcpX. Interacts with core component XcpT. Post-translationally, cleaved by prepilin peptidase. Methylated by prepilin peptidase at the amino group of the N-terminal phenylalanine once the leader sequence is cleaved by prepilin peptidase.

Its subcellular location is the cell inner membrane. In terms of biological role, component of the type II secretion system required for the energy-dependent secretion of extracellular factors such as proteases and toxins from the periplasm. Part of the pseudopilus tip complex that is critical for the recognition and binding of secretion substrates. Type II pseudopilus confers increased bacterial adhesive capabilities. This Pseudomonas aeruginosa (strain ATCC 15692 / DSM 22644 / CIP 104116 / JCM 14847 / LMG 12228 / 1C / PRS 101 / PAO1) protein is Type II secretion system protein J (xcpW).